A 260-amino-acid polypeptide reads, in one-letter code: MSEQPAASRIQVEALGDGFKARAEQWASLLGLPLQLADADFSLQVGEHGLQLQQLGPDAPGPVRVDFVEGGAAHRRLYGGGSGQMIAKAVGIAQGVRPRVLDATAGLGKDAFVLASLGCEMSLIERQPLIGALLEDGLARGADDFEVAPIVARMQLLKGNSIDVMRNWEGEPPQVIYLDPMFPHREKTALVKKEMRLFRPLVGDDPDAPALLAAALALASHRVVVKRPRKAPCIDGPKPSHALDGKSSRYDIYPKKALKP.

S-adenosyl-L-methionine contacts are provided by residues 125 to 126 (ER) and D179. The segment at 234–260 (IDGPKPSHALDGKSSRYDIYPKKALKP) is disordered. A compositionally biased stretch (basic and acidic residues) spans 241–254 (HALDGKSSRYDIYP).

Belongs to the methyltransferase superfamily. RsmJ family.

The protein localises to the cytoplasm. It catalyses the reaction guanosine(1516) in 16S rRNA + S-adenosyl-L-methionine = N(2)-methylguanosine(1516) in 16S rRNA + S-adenosyl-L-homocysteine + H(+). Specifically methylates the guanosine in position 1516 of 16S rRNA. In Pseudomonas fluorescens (strain SBW25), this protein is Ribosomal RNA small subunit methyltransferase J.